The chain runs to 364 residues: Flagellar P-ring protein (364 aa).

A signal peptide spans 1–21 (MNVFKVFCLMVLLGWQLPAMA).

This sequence belongs to the FlgI family. The basal body constitutes a major portion of the flagellar organelle and consists of four rings (L,P,S, and M) mounted on a central rod.

It is found in the periplasm. The protein localises to the bacterial flagellum basal body. In terms of biological role, assembles around the rod to form the L-ring and probably protects the motor/basal body from shearing forces during rotation. The sequence is that of Flagellar P-ring protein from Pseudoalteromonas translucida (strain TAC 125).